Reading from the N-terminus, the 279-residue chain is Mirror-image polydactyly gene 1 protein homolog (279 aa).

The span at 1 to 11 (MNSEQSIRELG) shows a compositional bias: basic and acidic residues. The segment at 1–21 (MNSEQSIRELGNEVPSEDLEL) is disordered. 2 coiled-coil regions span residues 65–169 (LNKE…MLEN) and 218–255 (AEEM…STNN). Residues 247–268 (KQNQTSTNNTKHPTAKNNQEHT) form a disordered region. A compositionally biased stretch (polar residues) spans 248–263 (QNQTSTNNTKHPTAKN).

The protein is Mirror-image polydactyly gene 1 protein homolog (Mipol1) of Mus musculus (Mouse).